The following is a 1026-amino-acid chain: Cadherin-like and PC-esterase domain-containing protein 1 (1026 aa).

The first 34 residues, 1–34 (MVCRPVFPCRRRFCPRPFLVGLVVAICLFYQTLT), serve as a signal peptide directing secretion. N-linked (GlcNAc...) asparagine glycans are attached at residues Asn-251, Asn-404, Asn-413, Asn-737, Asn-791, and Asn-985.

This sequence belongs to the PC-esterase family.

In Homo sapiens (Human), this protein is Cadherin-like and PC-esterase domain-containing protein 1 (CPED1).